Here is a 1290-residue protein sequence, read N- to C-terminus: 1-phosphatidylinositol 4,5-bisphosphate phosphodiesterase gamma-1 (1290 aa).

Ala-2 carries the N-acetylalanine modification. A PH 1 domain is found at Arg-27 to Glu-142. Positions Gln-152 to Arg-187 constitute an EF-hand domain. Asp-165, Asn-167, Glu-169, Arg-171, and Asp-176 together coordinate Ca(2+). One can recognise a PI-PLC X-box domain in the interval Asp-320–Lys-464. Catalysis depends on residues His-335 and His-380. Residues Ser-489–Thr-523 enclose the PH 2; first part domain. Tyr-506 carries the post-translational modification Phosphotyrosine. Residues Glu-522–Leu-544 are disordered. SH2 domains follow at residues Trp-550–Val-657 and Trp-668–Ile-756. A Phosphotyrosine; by SYK modification is found at Tyr-771. A Phosphotyrosine modification is found at Tyr-775. At Tyr-783 the chain carries Phosphotyrosine; by ITK, SYK and TXK. The SH3 domain maps to Thr-791–Asn-851. Residues Phe-895 to Gln-931 form the PH 2; second part domain. Residues Leu-953 to Arg-1070 form the PI-PLC Y-box domain. Tyr-977 is modified (phosphotyrosine). Residues Asp-1071–Asn-1194 form the C2 domain. Ser-1221, Pro-1222, Ser-1227, Ser-1233, and Ser-1248 each carry phosphoserine. A Phosphotyrosine modification is found at Tyr-1253. Position 1263 is a phosphoserine (Ser-1263). The segment at Phe-1271–Leu-1290 is disordered.

In terms of assembly, interacts with AGAP2 via its SH3 domain. Interacts (via SH2 domain) with RET. Interacts with FLT1 (tyrosine-phosphorylated). Interacts (via SH2 domain) with FGFR1, FGFR2, FGFR3 and FGFR4 (phosphorylated). Interacts with LAT (phosphorylated) upon TCR activation. Interacts (via SH3 domain) with the Pro-rich domain of TNK1. Associates with BLNK, VAV1, GRB2 and NCK1 in a B-cell antigen receptor-dependent fashion. Interacts with CBLB in activated T-cells; which inhibits phosphorylation. Interacts with SHB. Interacts (via SH3 domain) with the Arg/Gly-rich-flanked Pro-rich domains of KHDRBS1/SAM68. This interaction is selectively regulated by arginine methylation of KHDRBS1/SAM68. Interacts with INPP5D/SHIP1, THEMIS and CLNK. Interacts with AXL, FLT4 and KIT. Interacts with RALGPS1. Interacts (via the SH2 domains) with VIL1 (phosphorylated at C-terminus tyrosine phosphorylation sites). Interacts (via SH2 domain) with PDGFRA and PDGFRB (tyrosine phosphorylated). Interacts with PIP5K1C. Interacts with NTRK1 and NTRK2 (phosphorylated upon ligand-binding). Interacts with SYK; activates PLCG1. Interacts with GRB2, LAT and THEMIS upon TCR activation in thymocytes. Interacts with TESPA1; the association is increased with prolonged stimulation of the TCR and may facilitate the assembly of the LAT signalosome. Interacts (via C-terminal proline-rich domain (PRD)) with PLCG1 (via SH3 domain); this interaction leads to guanine nucleotide exchange from PlCG1 to DNM1 and enhances DNM1-dependent endocytosis. (Microbial infection) Interacts (via SH3 domain) with HEV ORF3 protein. Requires Ca(2+) as cofactor. Post-translationally, tyrosine phosphorylated in response to signaling via activated FLT3, KIT and PDGFRA. Tyrosine phosphorylated by activated FGFR1, FGFR2, FGFR3 and FGFR4. Tyrosine phosphorylated by activated FLT1 and KDR. Tyrosine phosphorylated by activated PDGFRB. The receptor-mediated activation of PLCG1 involves its phosphorylation by tyrosine kinases, in response to ligation of a variety of growth factor receptors and immune system receptors. For instance, SYK phosphorylates and activates PLCG1 in response to ligation of the B-cell receptor. May be dephosphorylated by PTPRJ. Phosphorylated by ITK and TXK on Tyr-783 upon TCR activation in T-cells. In terms of processing, ubiquitinated by CBLB in activated T-cells.

It is found in the cell projection. The protein resides in the lamellipodium. Its subcellular location is the ruffle. The catalysed reaction is a 1,2-diacyl-sn-glycero-3-phospho-(1D-myo-inositol-4,5-bisphosphate) + H2O = 1D-myo-inositol 1,4,5-trisphosphate + a 1,2-diacyl-sn-glycerol + H(+). It catalyses the reaction a 1,2-diacyl-sn-glycero-3-phospho-(1D-myo-inositol) + H2O = 1D-myo-inositol 1-phosphate + a 1,2-diacyl-sn-glycerol + H(+). Its activity is regulated as follows. Activated by phosphorylation on tyrosine residues. In terms of biological role, mediates the production of the second messenger molecules diacylglycerol (DAG) and inositol 1,4,5-trisphosphate (IP3). Plays an important role in the regulation of intracellular signaling cascades. Becomes activated in response to ligand-mediated activation of receptor-type tyrosine kinases, such as PDGFRA, PDGFRB, EGFR, FGFR1, FGFR2, FGFR3 and FGFR4. Plays a role in actin reorganization and cell migration. Guanine nucleotide exchange factor that binds the GTPase DNM1 and catalyzes the dissociation of GDP, allowing a GTP molecule to bind in its place, therefore enhancing DNM1-dependent endocytosis. The sequence is that of 1-phosphatidylinositol 4,5-bisphosphate phosphodiesterase gamma-1 from Homo sapiens (Human).